The following is a 430-amino-acid chain: Adenylosuccinate synthetase (430 aa).

Residues 13–19 (GDEGKGK) and 41–43 (GHT) each bind GTP. The active-site Proton acceptor is Asp14. Mg(2+) contacts are provided by Asp14 and Gly41. IMP contacts are provided by residues 14 to 17 (DEGK), 39 to 42 (NAGH), Thr130, Arg144, Gln225, Thr240, and Arg304. The active-site Proton donor is His42. 300 to 306 (STTGRAR) is a substrate binding site. GTP is bound by residues Arg306, 332 to 334 (KLD), and 414 to 416 (STG).

The protein belongs to the adenylosuccinate synthetase family. In terms of assembly, homodimer. It depends on Mg(2+) as a cofactor.

It is found in the cytoplasm. The enzyme catalyses IMP + L-aspartate + GTP = N(6)-(1,2-dicarboxyethyl)-AMP + GDP + phosphate + 2 H(+). Its pathway is purine metabolism; AMP biosynthesis via de novo pathway; AMP from IMP: step 1/2. In terms of biological role, plays an important role in the de novo pathway of purine nucleotide biosynthesis. Catalyzes the first committed step in the biosynthesis of AMP from IMP. This Alcanivorax borkumensis (strain ATCC 700651 / DSM 11573 / NCIMB 13689 / SK2) protein is Adenylosuccinate synthetase.